A 155-amino-acid chain; its full sequence is Eosinophil cationic protein (155 aa).

The signal sequence occupies residues 1–25 (MGLKLLESRLCLLLSLGLVLMLASC). His-38 functions as the Proton acceptor in the catalytic mechanism. Disulfide bonds link Cys-47-Cys-106, Cys-61-Cys-118, Cys-79-Cys-133, and Cys-86-Cys-94. 62–66 (KDINT) contributes to the substrate binding site. N-linked (GlcNAc...) asparagine glycans are attached at residues Asn-88 and Asn-107. The active-site Proton donor is the His-150.

The protein belongs to the pancreatic ribonuclease family.

The protein localises to the cytoplasmic granule. Cytotoxin and helminthotoxin with ribonuclease activity. Possesses a wide variety of biological activities. In Rattus norvegicus (Rat), this protein is Eosinophil cationic protein (Rnase3).